Here is a 1119-residue protein sequence, read N- to C-terminus: Period circadian protein homolog 3 (1119 aa).

The segment at 1–48 (MDPCGNPAVPGGDCPQTRGPGLQGSSGQEGPLQGICVDSSHSEHEDRN) is disordered. The short motif at 54–63 (LIMVVQEMKK) is the Nuclear export signal 1 element. 2 consecutive PAS domains span residues 120–187 (LASE…PTQL) and 259–325 (YEAP…KVLK). The PAC domain maps to 334–377 (HSPIRFCTQNGDYVILDSSWSSFVNPWSRKVSFIIGRHKVRTSP). A Nuclear export signal 3 motif is present at residues 400–409 (LQEQIHRLLL). Over residues 419–428 (GYGSLGSSGS) the composition is skewed to low complexity. Disordered stretches follow at residues 419 to 449 (GYGSLGSSGSQEQHISVTSSSESSGHCVEEA), 483 to 530 (VKPV…SSSY), 718 to 744 (HSRCAGSERRKHKRKKLPTPVDSSSSS), and 878 to 910 (LEPTPSDHGPRRVEENWETHSEEEHPFISSRSS). Composition is skewed to polar residues over residues 429 to 442 (QEQHISVTSSSESS) and 491 to 515 (TEPQGSDEQKDFSSSQTLKNKSTDT). Positions 551-750 (LKRKCISCTN…SSSSAHLCPH (200 aa)) are CSNK1E binding domain. A Nuclear localization signal motif is present at residues 720-739 (RCAGSERRKHKRKKLPTPVD). A compositionally biased stretch (basic and acidic residues) spans 885–903 (HGPRRVEENWETHSEEEHP). The residue at position 907 (Ser907) is a Phosphoserine. A Nuclear export signal 2 motif is present at residues 913–920 (LQLNLLQE). A disordered region spans residues 947–1011 (GNSGSRSPPC…QDTHRDRAFS (65 aa)). Residues 970–988 (SPSAAASGSSASSVHGSGS) show a composition bias toward low complexity. Polar residues predominate over residues 989 to 1001 (DYTSEVSENGQRS). The interval 1037–1119 (ERGRDTVLRE…VQQKTPVEQL (83 aa)) is CRY binding domain.

In terms of assembly, homodimer. Component of the circadian core oscillator, which includes the CRY proteins, CLOCK or NPAS2, BMAL1 or BMAL2, CSNK1D and/or CSNK1E, TIMELESS and the PER proteins. Interacts directly with PER1, PER2, CRY1, CRY2, and TIMELESS; interaction with CRY1 and CRY2 is weak and not rhythmic. Interacts with FBXW11 and BTRC. Post-translationally, phosphorylation by CSNK1E is weak and appears to require association with PER1 and translocation to the nucleus. Ubiquitinated.

The protein localises to the cytoplasm. It localises to the nucleus. Its function is as follows. Originally described as a core component of the circadian clock. The circadian clock, an internal time-keeping system, regulates various physiological processes through the generation of approximately 24 hour circadian rhythms in gene expression, which are translated into rhythms in metabolism and behavior. It is derived from the Latin roots 'circa' (about) and 'diem' (day) and acts as an important regulator of a wide array of physiological functions including metabolism, sleep, body temperature, blood pressure, endocrine, immune, cardiovascular, and renal function. Consists of two major components: the central clock, residing in the suprachiasmatic nucleus (SCN) of the brain, and the peripheral clocks that are present in nearly every tissue and organ system. Both the central and peripheral clocks can be reset by environmental cues, also known as Zeitgebers (German for 'timegivers'). The predominant Zeitgeber for the central clock is light, which is sensed by retina and signals directly to the SCN. The central clock entrains the peripheral clocks through neuronal and hormonal signals, body temperature and feeding-related cues, aligning all clocks with the external light/dark cycle. Circadian rhythms allow an organism to achieve temporal homeostasis with its environment at the molecular level by regulating gene expression to create a peak of protein expression once every 24 hours to control when a particular physiological process is most active with respect to the solar day. Transcription and translation of core clock components (CLOCK, NPAS2, BMAL1, BMAL2, PER1, PER2, PER3, CRY1 and CRY2) plays a critical role in rhythm generation, whereas delays imposed by post-translational modifications (PTMs) are important for determining the period (tau) of the rhythms (tau refers to the period of a rhythm and is the length, in time, of one complete cycle). A diurnal rhythm is synchronized with the day/night cycle, while the ultradian and infradian rhythms have a period shorter and longer than 24 hours, respectively. Disruptions in the circadian rhythms contribute to the pathology of cardiovascular diseases, cancer, metabolic syndromes and aging. A transcription/translation feedback loop (TTFL) forms the core of the molecular circadian clock mechanism. Transcription factors, CLOCK or NPAS2 and BMAL1 or BMAL2, form the positive limb of the feedback loop, act in the form of a heterodimer and activate the transcription of core clock genes and clock-controlled genes (involved in key metabolic processes), harboring E-box elements (5'-CACGTG-3') within their promoters. The core clock genes: PER1/2/3 and CRY1/2 which are transcriptional repressors form the negative limb of the feedback loop and interact with the CLOCK|NPAS2-BMAL1|BMAL2 heterodimer inhibiting its activity and thereby negatively regulating their own expression. This heterodimer also activates nuclear receptors NR1D1, NR1D2, RORA, RORB and RORG, which form a second feedback loop and which activate and repress BMAL1 transcription, respectively. Has a redundant role with the other PER proteins PER1 and PER2 and is not essential for the circadian rhythms maintenance. In contrast, plays an important role in sleep-wake timing and sleep homeostasis probably through the transcriptional regulation of sleep homeostasis-related genes, without influencing circadian parameters. Can bind heme. The polypeptide is Period circadian protein homolog 3 (Per3) (Rattus norvegicus (Rat)).